The following is a 214-amino-acid chain: Dual specificity phosphatase 29 (214 aa).

Residues His46–Leu194 enclose the Tyrosine-protein phosphatase domain. Residue His138–Arg145 participates in substrate binding. Cys139 serves as the catalytic Phosphocysteine intermediate.

The protein belongs to the protein-tyrosine phosphatase family. Non-receptor class dual specificity subfamily.

The protein resides in the cytoplasm. The protein localises to the nucleus. It carries out the reaction O-phospho-L-tyrosyl-[protein] + H2O = L-tyrosyl-[protein] + phosphate. The enzyme catalyses O-phospho-L-seryl-[protein] + H2O = L-seryl-[protein] + phosphate. The catalysed reaction is O-phospho-L-threonyl-[protein] + H2O = L-threonyl-[protein] + phosphate. Dual specificity phosphatase able to dephosphorylate phosphotyrosine, phosphoserine and phosphothreonine residues within the same substrate, with a preference for phosphotyrosine as a substrate. Involved in the modulation of AMPK and MAPK1/2 signaling pathways. This chain is Dual specificity phosphatase 29 (DUSP29), found in Gallus gallus (Chicken).